The chain runs to 201 residues: Protein ripply1 (201 aa).

The interval 1–29 is disordered; that stretch reads MDPAASPAAAPPAAPAAAPAADPAADPAA. Residues 15–29 are compositionally biased toward low complexity; sequence PAAAPAADPAADPAA. Positions 57–60 match the WRPW motif motif; that stretch reads AYLW. Positions 99–134 are ripply homology domain; the sequence is HPVRLYWPKSHSFDYLYSAGEILLNNFPVQATINLY. Residues 136-174 are compositionally biased toward acidic residues; sequence DSDSADNEEDKEEEEEEEEEEDDEEEEEDEDKDVNENEP. The disordered stretch occupies residues 136–201; that stretch reads DSDSADNEED…SPDPHSACPN (66 aa).

The protein belongs to the ripply family. As to expression, expressed in the anterior presomitic mesoderm and somites of stage E9.5 dpc embryos. Also expressed in tongue, diaphragm and intercostal muscles at 16.5 dpc.

It localises to the nucleus. Its function is as follows. Plays a role in somitogenesis. Essential for transcriptional repression of the segmental patterning genes, thus terminating the segmentation program in the presomitic mesoderm, and also required for the maintenance of rostrocaudal polarity in somites. This is Protein ripply1 from Mus musculus (Mouse).